Here is a 587-residue protein sequence, read N- to C-terminus: Laccase abr2 (587 aa).

Positions 1-17 (MWYQSASLLGVAAVAQA) are cleaved as a signal peptide. 2 Plastocyanin-like domains span residues 41 to 137 (IFVN…VHIR) and 168 to 350 (LVML…ANDG). Asn-71 carries N-linked (GlcNAc...) asparagine glycosylation. Cu cation contacts are provided by His-75, His-77, His-119, and His-121. Residues Asn-228, Asn-383, Asn-420, and Asn-462 are each glycosylated (N-linked (GlcNAc...) asparagine). The Plastocyanin-like 3 domain maps to 397-577 (PPYPAISPAS…ILMDGVDVWP (181 aa)). His-487 provides a ligand contact to Cu cation. Asn-504 is a glycosylation site (N-linked (GlcNAc...) asparagine).

The protein belongs to the multicopper oxidase family.

The protein localises to the cell surface. The protein operates within pigment biosynthesis; melanin biosynthesis. Laccase; part of the gene cluster that mediates the biosynthesis of dihydroxynaphthalene (DHN)-melanin, a bluish-green pigment and a structural component of the conidial wall. The first step of the pathway is the production of the heptaketide naphtopyrone YWA1 by the polyketide synthase alb1 though condensation of acetyl-CoA with malonyl-CoA. The naphtopyrone YWA1 is then converted to the pentaketide 1,3,6,8-tetrahydroxynaphthalene (1,3,6,8-THN) by the heptaketide hydrolyase ayg1 though chain-length shortening. 1,3,6,8-THN is substrate of the hydroxynaphthalene reductase arp2 to yield scytalone. The scytalone dehydratase arp1 then reduces scytalone to 1,3,8-THN. 1,3,8-THN is also substrate of the hydroxynaphthalene reductase arp2 to yield vermelone. Vermelone is further converted by the multicopper oxidase abr1 to 1,8-DHN. Finally the laccase abr2 transforms 1,8-DHN to DHN-melanin. DHN-melanin biosynthesis appears to be initiated in endosomes where early enzymes (abl1, ayg1, arp1 and arp2) localize, with exocytosis leading to melanin deposition on the cell surface where late enzymes (abr1 and abr2) localize. DHN-melanin is an important structural component of the outer cell wall and is required for the presence of conidial surface hydrophobins. DHN-melanin also plays a crucial role in fungal virulence, including a protective role against the host's immune defenses. DHN-melanin also protects conidia against amoeba predation. The polypeptide is Laccase abr2 (Aspergillus fumigatus (strain ATCC MYA-4609 / CBS 101355 / FGSC A1100 / Af293) (Neosartorya fumigata)).